A 424-amino-acid polypeptide reads, in one-letter code: Histidine--tRNA ligase (424 aa).

Belongs to the class-II aminoacyl-tRNA synthetase family. Homodimer.

It is found in the cytoplasm. The catalysed reaction is tRNA(His) + L-histidine + ATP = L-histidyl-tRNA(His) + AMP + diphosphate + H(+). The sequence is that of Histidine--tRNA ligase from Yersinia pestis bv. Antiqua (strain Antiqua).